The sequence spans 239 residues: Beta-glucanase (239 aa).

Residues 1–25 form the signal peptide; it reads MKRVLLILVTGLFMSLCGITSSVSA. One can recognise a GH16 domain in the interval 26–239; that stretch reads QTGGSFFEPF…HYDWMRYRKK (214 aa). Cys-57 and Cys-86 are disulfide-bonded. Glu-134 serves as the catalytic Nucleophile.

This sequence belongs to the glycosyl hydrolase 16 family.

The enzyme catalyses Hydrolysis of (1-&gt;4)-beta-D-glucosidic linkages in beta-D-glucans containing (1-&gt;3)- and (1-&gt;4)-bonds.. The protein is Beta-glucanase (bglA) of Bacillus amyloliquefaciens (Bacillus velezensis).